We begin with the raw amino-acid sequence, 87 residues long: Small ribosomal subunit protein bS20 (87 aa).

It belongs to the bacterial ribosomal protein bS20 family.

Its function is as follows. Binds directly to 16S ribosomal RNA. The polypeptide is Small ribosomal subunit protein bS20 (Clostridium beijerinckii (strain ATCC 51743 / NCIMB 8052) (Clostridium acetobutylicum)).